A 382-amino-acid chain; its full sequence is UDP-4-amino-4-deoxy-L-arabinose--oxoglutarate aminotransferase (382 aa).

N6-(pyridoxal phosphate)lysine is present on lysine 183.

The protein belongs to the DegT/DnrJ/EryC1 family. ArnB subfamily. As to quaternary structure, homodimer. Requires pyridoxal 5'-phosphate as cofactor.

It catalyses the reaction UDP-4-amino-4-deoxy-beta-L-arabinose + 2-oxoglutarate = UDP-beta-L-threo-pentopyranos-4-ulose + L-glutamate. Its pathway is nucleotide-sugar biosynthesis; UDP-4-deoxy-4-formamido-beta-L-arabinose biosynthesis; UDP-4-deoxy-4-formamido-beta-L-arabinose from UDP-alpha-D-glucuronate: step 2/3. It functions in the pathway bacterial outer membrane biogenesis; lipopolysaccharide biosynthesis. Its function is as follows. Catalyzes the conversion of UDP-4-keto-arabinose (UDP-Ara4O) to UDP-4-amino-4-deoxy-L-arabinose (UDP-L-Ara4N). The modified arabinose is attached to lipid A and is required for resistance to polymyxin and cationic antimicrobial peptides. This is UDP-4-amino-4-deoxy-L-arabinose--oxoglutarate aminotransferase from Pseudomonas syringae pv. syringae (strain B728a).